The chain runs to 327 residues: L-serine dehydratase/L-threonine deaminase (327 aa).

Residue lysine 41 is modified to N6-(pyridoxal phosphate)lysine.

This sequence belongs to the serine/threonine dehydratase family. In terms of assembly, homodimer. It depends on pyridoxal 5'-phosphate as a cofactor.

It localises to the cytoplasm. The catalysed reaction is L-serine = pyruvate + NH4(+). It catalyses the reaction L-threonine = 2-oxobutanoate + NH4(+). Its pathway is carbohydrate biosynthesis; gluconeogenesis. In terms of biological role, catalyzes the pyridoxal-phosphate-dependent dehydrative deamination of L-threonine and L-serine to ammonia and alpha-ketobutyrate and pyruvate, respectively. This chain is L-serine dehydratase/L-threonine deaminase (SDS), found in Bos taurus (Bovine).